Consider the following 224-residue polypeptide: BOS complex subunit TMEM147 (224 aa).

A helical transmembrane segment spans residues 1-21; it reads MTLFHFGNCFALAYFPYFITY. Over 22–34 the chain is Cytoplasmic; the sequence is KCSGLSEYNAFWK. Residues 35-58 traverse the membrane as a helical segment; the sequence is CVQAGVTYLFVQLCKMLFLATFFP. At 59 to 66 the chain is on the lumenal side; it reads TWEGGIYD. A helical transmembrane segment spans residues 67–88; that stretch reads FIGEFMKASVDVADLIGLNLVM. The Cytoplasmic portion of the chain corresponds to 89–98; the sequence is SRNAGKGEYK. Residues 99–124 traverse the membrane as a helical segment; that stretch reads IMVAALGWATAELIMSRCIPLWVGAR. Residues 125 to 129 are Lumenal-facing; that stretch reads GIEFD. A helical transmembrane segment spans residues 130–155; that stretch reads WKYIQMSIDSNISLVHYIVASAQVWM. Over 156–164 the chain is Cytoplasmic; the sequence is ITRYDLYHT. Residues 165 to 187 traverse the membrane as a helical segment; sequence FRPAVLLLMFLSVYKAFVMETFV. Residues 188 to 194 lie on the Lumenal side of the membrane; sequence HLCSLGS. A helical membrane pass occupies residues 195 to 216; sequence WAALLARAVVTGLLALSTLALY. The Cytoplasmic segment spans residues 217–224; the sequence is VAVVNVHS.

Belongs to the TMEM147 family. In terms of assembly, component of the back of Sec61 (BOS) complex, composed of NCLN/Nicalin, NOMO (NOMO1, NOMO2 or NOMO3) and TMEM147. The BOS complex is part of the multi-pass translocon (MPT) complex, composed of three subcomplexes, the GEL complex (composed of RAB5IF/OPTI and TMCO1), the BOS complex (composed of NCLN/Nicalin, NOMO and TMEM147) and the PAT complex (composed of WDR83OS/Asterix and CCDC47). The MPT complex associates with the SEC61 complex. Interacts with CHRM3, CHRM1 and AVPR2. Interacts with LBR; promoting LBR localization to the nucleus inner membrane. Interacts with DHCR7.

It localises to the endoplasmic reticulum membrane. The protein resides in the nucleus membrane. Its subcellular location is the cell membrane. In terms of biological role, component of the multi-pass translocon (MPT) complex that mediates insertion of multi-pass membrane proteins into the lipid bilayer of membranes. The MPT complex takes over after the SEC61 complex: following membrane insertion of the first few transmembrane segments of proteins by the SEC61 complex, the MPT complex occludes the lateral gate of the SEC61 complex to promote insertion of subsequent transmembrane regions. Also acts as a negative regulator of CHRM3 function, most likely by interfering with its trafficking to the cell membrane. Negatively regulates CHRM3-mediated calcium mobilization and activation of RPS6KA1/p90RSK activity. Regulates LBR localization to the nucleus inner membrane. This chain is BOS complex subunit TMEM147, found in Homo sapiens (Human).